The chain runs to 318 residues: Biotin synthase (318 aa).

Positions 44–273 constitute a Radical SAM core domain; it reads LCGNKFDLCT…TVQIRLAGGR (230 aa). [4Fe-4S] cluster-binding residues include Cys-62, Cys-66, and Cys-69. Ser-106, Cys-138, Cys-198, and Arg-268 together coordinate [2Fe-2S] cluster.

The protein belongs to the radical SAM superfamily. Biotin synthase family. In terms of assembly, homodimer. [4Fe-4S] cluster is required as a cofactor. [2Fe-2S] cluster serves as cofactor.

The enzyme catalyses (4R,5S)-dethiobiotin + (sulfur carrier)-SH + 2 reduced [2Fe-2S]-[ferredoxin] + 2 S-adenosyl-L-methionine = (sulfur carrier)-H + biotin + 2 5'-deoxyadenosine + 2 L-methionine + 2 oxidized [2Fe-2S]-[ferredoxin]. The protein operates within cofactor biosynthesis; biotin biosynthesis; biotin from 7,8-diaminononanoate: step 2/2. Catalyzes the conversion of dethiobiotin (DTB) to biotin by the insertion of a sulfur atom into dethiobiotin via a radical-based mechanism. The sequence is that of Biotin synthase from Clostridium botulinum (strain Langeland / NCTC 10281 / Type F).